Here is an 89-residue protein sequence, read N- to C-terminus: uncharacterized protein (89 aa).

A run of 3 helical transmembrane segments spans residues 9-29 (ICNF…LHSI), 35-55 (ISLS…YIYL), and 65-85 (ILFA…FGTS).

Its subcellular location is the membrane. This is an uncharacterized protein from Schizosaccharomyces pombe (strain 972 / ATCC 24843) (Fission yeast).